We begin with the raw amino-acid sequence, 194 residues long: Large ribosomal subunit protein bL25 (194 aa).

It belongs to the bacterial ribosomal protein bL25 family. CTC subfamily. As to quaternary structure, part of the 50S ribosomal subunit; part of the 5S rRNA/L5/L18/L25 subcomplex. Contacts the 5S rRNA. Binds to the 5S rRNA independently of L5 and L18.

Its function is as follows. This is one of the proteins that binds to the 5S RNA in the ribosome where it forms part of the central protuberance. The protein is Large ribosomal subunit protein bL25 of Thermobifida fusca (strain YX).